Consider the following 297-residue polypeptide: Aspartate carbamoyltransferase catalytic subunit (297 aa).

Carbamoyl phosphate contacts are provided by Arg51 and Thr52. Lys79 provides a ligand contact to L-aspartate. Residues Arg101, His130, and Gln133 each coordinate carbamoyl phosphate. Positions 163 and 215 each coordinate L-aspartate. Gly256 and Pro257 together coordinate carbamoyl phosphate.

The protein belongs to the aspartate/ornithine carbamoyltransferase superfamily. ATCase family. As to quaternary structure, heterododecamer (2C3:3R2) of six catalytic PyrB chains organized as two trimers (C3), and six regulatory PyrI chains organized as three dimers (R2).

The enzyme catalyses carbamoyl phosphate + L-aspartate = N-carbamoyl-L-aspartate + phosphate + H(+). It participates in pyrimidine metabolism; UMP biosynthesis via de novo pathway; (S)-dihydroorotate from bicarbonate: step 2/3. Functionally, catalyzes the condensation of carbamoyl phosphate and aspartate to form carbamoyl aspartate and inorganic phosphate, the committed step in the de novo pyrimidine nucleotide biosynthesis pathway. The chain is Aspartate carbamoyltransferase catalytic subunit from Ehrlichia ruminantium (strain Gardel).